The primary structure comprises 1210 residues: Microtubule-associated tumor suppressor 1 homolog (1210 aa).

Disordered stretches follow at residues 1 to 21, 370 to 404, 446 to 482, 513 to 545, and 585 to 618; these read MNDDNSDRTEDGSRYVFIRDK, DPHIDSHDNDSDIQSSTEELTLRSVSGQRGSPYEM, VENGPRDAKRAPNLKGEPTNMPKPNLGKSATKTNTTV, QPKDTSIMKDTPSPQVTGGSSPSPGPSKHLTMM, and HSKNASLGVPRTTSATKSNQENVDKTGSPHAGSE. Over residues 370–379 the composition is skewed to basic and acidic residues; that stretch reads DPHIDSHDND. A phosphoserine mark is found at Ser-375, Ser-380, and Ser-393. Over residues 381-398 the composition is skewed to polar residues; sequence DIQSSTEELTLRSVSGQR. Basic and acidic residues predominate over residues 446 to 455; the sequence is VENGPRDAKR. The span at 473–482 shows a compositional bias: polar residues; it reads KSATKTNTTV. Low complexity predominate over residues 524–534; sequence PSPQVTGGSSP. Residues 585 to 605 are compositionally biased toward polar residues; sequence HSKNASLGVPRTTSATKSNQE. Ser-621 is subject to Phosphoserine. The tract at residues 683–771 is disordered; sequence SKSLLVGSAP…YEEKPPKQAF (89 aa). A compositionally biased stretch (polar residues) spans 692 to 702; the sequence is PKTSTTPGRSS. Residues 876-1171 adopt a coiled-coil conformation; it reads IQHLLSEREE…RLSMENEELL (296 aa). Residues Ser-1143, Ser-1164, Ser-1185, Ser-1195, Ser-1199, Ser-1201, Ser-1203, Ser-1204, and Ser-1208 each carry the phosphoserine modification. The interval 1177–1210 is disordered; sequence GDLCSPKRSPTSSAIPFQSPRNSGSFSSPSISPR. Residues 1195–1210 are compositionally biased toward low complexity; it reads SPRNSGSFSSPSISPR.

This sequence belongs to the MTUS1 family. Homodimer. Interacts with AGTR2. Interacts with PTPN6. As to expression, ubiquitously expressed, with highest levels in uterus and adrenal gland.

It localises to the mitochondrion. Its subcellular location is the golgi apparatus. It is found in the cell membrane. The protein resides in the nucleus. In terms of biological role, cooperates with AGTR2 to inhibit ERK2 activation and cell proliferation. May be required for AGTR2 cell surface expression. Together with PTPN6, induces UBE2V2 expression upon angiotensin-II stimulation. This chain is Microtubule-associated tumor suppressor 1 homolog (Mtus1), found in Mus musculus (Mouse).